The sequence spans 154 residues: Large ribosomal subunit protein uL15 (154 aa).

The interval 1–54 (MKLHDLTPAPGSRKPKKRVGRGPGGTDKTAGRGHKGQKSRSGAGKGPFFEGGRS) is disordered.

The protein belongs to the universal ribosomal protein uL15 family. As to quaternary structure, part of the 50S ribosomal subunit.

Its function is as follows. Binds to the 23S rRNA. This chain is Large ribosomal subunit protein uL15, found in Deinococcus geothermalis (strain DSM 11300 / CIP 105573 / AG-3a).